The sequence spans 126 residues: Holo-[acyl-carrier-protein] synthase (126 aa).

Mg(2+) is bound by residues aspartate 9 and glutamate 58.

Belongs to the P-Pant transferase superfamily. AcpS family. Mg(2+) is required as a cofactor.

The protein localises to the cytoplasm. It catalyses the reaction apo-[ACP] + CoA = holo-[ACP] + adenosine 3',5'-bisphosphate + H(+). Its function is as follows. Transfers the 4'-phosphopantetheine moiety from coenzyme A to a Ser of acyl-carrier-protein. This Salmonella newport (strain SL254) protein is Holo-[acyl-carrier-protein] synthase.